The chain runs to 394 residues: MVGNTFGRIFRVTTCGESYAGAFRKNLQIPKELFGGLIAIVDGVPPGIKLTADFVQEELDKRRPGKTPLDTPRKERDKVYIFSGVMEDDITTGAPVGMIIPNDVIEDEHINKHKSYKEVVRPGQAGYTFFKKYGQFADNIGAGRASGRETAARVAAGAVAKAVLDTMGIDVIAFVTEIHGIKAQENITYEMAKANYRKNEINCPDLEKAKEMIEELKRIKEEGDSVGGVVEIIARGVPAGLGEPVFDKLQATLAHALMSIGAIKGIEFGEGFGHTKLKGSESNDVPYYDEASGRVRFKTNRAGGILGGISNGEDIRIRVAVKPTPTISIPQKTVNMYTLENVEVEFNTRNDPSICPRIYPVCEAMVRIALLDALYIAKGYRAISSNIDPRWDRL.

Arg-62 provides a ligand contact to NADP(+). FMN-binding positions include Arg-144–Ser-146, Gly-307, Lys-322–Thr-326, and Arg-349.

This sequence belongs to the chorismate synthase family. In terms of assembly, homotetramer. It depends on FMNH2 as a cofactor.

It catalyses the reaction 5-O-(1-carboxyvinyl)-3-phosphoshikimate = chorismate + phosphate. Its pathway is metabolic intermediate biosynthesis; chorismate biosynthesis; chorismate from D-erythrose 4-phosphate and phosphoenolpyruvate: step 7/7. Functionally, catalyzes the anti-1,4-elimination of the C-3 phosphate and the C-6 proR hydrogen from 5-enolpyruvylshikimate-3-phosphate (EPSP) to yield chorismate, which is the branch point compound that serves as the starting substrate for the three terminal pathways of aromatic amino acid biosynthesis. This reaction introduces a second double bond into the aromatic ring system. This chain is Chorismate synthase, found in Acetivibrio thermocellus (strain ATCC 27405 / DSM 1237 / JCM 9322 / NBRC 103400 / NCIMB 10682 / NRRL B-4536 / VPI 7372) (Clostridium thermocellum).